A 310-amino-acid chain; its full sequence is Dihydroorotate dehydrogenase B (NAD(+)), catalytic subunit (310 aa).

Residues serine 19 and 43 to 44 each bind FMN; that span reads KA. Residues lysine 43 and 67–71 contribute to the substrate site; that span reads NAIGL. Residues asparagine 97 and asparagine 125 each coordinate FMN. A substrate-binding site is contributed by asparagine 125. The Nucleophile role is filled by cysteine 128. Residues lysine 163 and isoleucine 189 each coordinate FMN. Residue 190 to 191 coordinates substrate; it reads NT. FMN contacts are provided by residues glycine 215, 241-242, and 263-264; these read GG and GT.

The protein belongs to the dihydroorotate dehydrogenase family. Type 1 subfamily. Heterotetramer of 2 PyrK and 2 PyrD type B subunits. Requires FMN as cofactor.

Its subcellular location is the cytoplasm. It carries out the reaction (S)-dihydroorotate + NAD(+) = orotate + NADH + H(+). The protein operates within pyrimidine metabolism; UMP biosynthesis via de novo pathway; orotate from (S)-dihydroorotate (NAD(+) route): step 1/1. Catalyzes the conversion of dihydroorotate to orotate with NAD(+) as electron acceptor. This chain is Dihydroorotate dehydrogenase B (NAD(+)), catalytic subunit (pyrD), found in Bacillus pumilus (strain SAFR-032).